The primary structure comprises 771 residues: Endoplasmin homolog (771 aa).

An N-terminal signal peptide occupies residues 1–24 (MANSSLLRVVLVALLLLGSVTVSA). Residues N63, D109, and F160 each contribute to the ATP site. The N-linked (GlcNAc...) asparagine glycan is linked to N63. The segment at 253–282 (TAATPEPAAEEGSLDEGAVEEDPDKEGDTQ) is disordered. Over residues 260–277 (AAEEGSLDEGAVEEDPDK) the composition is skewed to acidic residues. N-linked (GlcNAc...) asparagine glycans are attached at residues N306 and N402. Residues 727–771 (ADDSLLPPDDAEYTVSDTEAEEEEEQPKVDANADEEAEAVGEDDL) are disordered. Positions 758–771 (NADEEAEAVGEDDL) are enriched in acidic residues. A Prevents secretion from ER motif is present at residues 768–771 (EDDL).

It belongs to the heat shock protein 90 family. As to quaternary structure, homotetramer.

It is found in the endoplasmic reticulum. In terms of biological role, molecular chaperone that functions in the processing and transport of secreted proteins. Required for the synthesis of lipophosphoglycan (LPG), a cell surface glycoconjugate. Necessary for the attachment of the galactosyl residue to the mannose within the phosphoglycan repeats of the nascent LPG chain. Also required for addition of phosphoglycan to acid phosphatase. Not required for normal growth. Has ATPase activity. Binds heparin with micromolar affinity which may facilitate infection of host cells. The polypeptide is Endoplasmin homolog (Leishmania infantum).